The following is a 75-amino-acid chain: Protein SlyX homolog (75 aa).

This sequence belongs to the SlyX family.

In Vibrio campbellii (strain ATCC BAA-1116), this protein is Protein SlyX homolog.